Consider the following 206-residue polypeptide: Imidazoleglycerol-phosphate dehydratase (206 aa).

This sequence belongs to the imidazoleglycerol-phosphate dehydratase family.

Its subcellular location is the cytoplasm. It carries out the reaction D-erythro-1-(imidazol-4-yl)glycerol 3-phosphate = 3-(imidazol-4-yl)-2-oxopropyl phosphate + H2O. Its pathway is amino-acid biosynthesis; L-histidine biosynthesis; L-histidine from 5-phospho-alpha-D-ribose 1-diphosphate: step 6/9. This is Imidazoleglycerol-phosphate dehydratase from Mycolicibacterium smegmatis (strain ATCC 700084 / mc(2)155) (Mycobacterium smegmatis).